The chain runs to 154 residues: MGKSASKQFHNEVLKAHNEYRQKHGVPPLKLCKNLNREAQQYSEALASTRILKHSPESSRGQCGENLAWASYDQTGKEVADRWYSEIKNYNFQQPGFTSGTGHFTAMVWKNTKKMGVGKASASDGSSFVVARYFPAGNVVNEGFFEENVLPPKK.

Positions M1–R21 are disordered. G2 carries the N-myristoyl glycine lipid modification. Basic and acidic residues predominate over residues F9–R21. Positions L14–R132 constitute an SCP domain. Positions K30 to K53 form a coiled coil. Residues N91–T98 are interaction with CAV1.

This sequence belongs to the CRISP family. Homodimer. Interacts with CAV1. In terms of tissue distribution, highest expression in lung and peripheral leukocytes, and minor expression in liver and kidney.

It localises to the golgi apparatus membrane. This Homo sapiens (Human) protein is Golgi-associated plant pathogenesis-related protein 1 (GLIPR2).